The following is a 368-amino-acid chain: MRVDLFDFELPEAAIALRPASPRDASRLLVVRPGDPLADRGVRDLPALLSPGDALVFNDTRVIPARLSGIRHRAGGSGQRCEAMLHLREAPDRWRAFARPAKRLAPGDRIRFGSEGASEVCALSGLDATVEERGEGGEILLRFDLSGPALDEAIAGLGALPLPPYIAGKRPTDAQDTTDYQTVYAREPGAVAAPTAGLHFSDALLAGIDAAGIERVHVTLHVGAGTFLPVKADDTDAHRMHAEIGILDAATAARLNAVRARGNRVVAVGTTALRLLESAADPDGTIRPFSGATDIFITPGYRFRAVDALVTNFHLPRSTLFMLVSAFAGLDTMRAAYAHAIQSGYRFYSYGDASLLFPEGAPVSESIT.

The protein belongs to the QueA family. Monomer.

The protein localises to the cytoplasm. The enzyme catalyses 7-aminomethyl-7-carbaguanosine(34) in tRNA + S-adenosyl-L-methionine = epoxyqueuosine(34) in tRNA + adenine + L-methionine + 2 H(+). It functions in the pathway tRNA modification; tRNA-queuosine biosynthesis. In terms of biological role, transfers and isomerizes the ribose moiety from AdoMet to the 7-aminomethyl group of 7-deazaguanine (preQ1-tRNA) to give epoxyqueuosine (oQ-tRNA). The sequence is that of S-adenosylmethionine:tRNA ribosyltransferase-isomerase from Methylorubrum extorquens (strain CM4 / NCIMB 13688) (Methylobacterium extorquens).